A 502-amino-acid polypeptide reads, in one-letter code: Exodeoxyribonuclease 7 large subunit (502 aa).

Positions 474-495 (SAPSTTKKSAPKPAAPKAPKTP) are enriched in low complexity. Positions 474–502 (SAPSTTKKSAPKPAAPKAPKTPGEQGSLF) are disordered.

It belongs to the XseA family. Heterooligomer composed of large and small subunits.

It localises to the cytoplasm. It carries out the reaction Exonucleolytic cleavage in either 5'- to 3'- or 3'- to 5'-direction to yield nucleoside 5'-phosphates.. Functionally, bidirectionally degrades single-stranded DNA into large acid-insoluble oligonucleotides, which are then degraded further into small acid-soluble oligonucleotides. The protein is Exodeoxyribonuclease 7 large subunit of Ruegeria sp. (strain TM1040) (Silicibacter sp.).